Consider the following 303-residue polypeptide: BAG family molecular chaperone regulator 3 (303 aa).

Over residues 1–11 the composition is skewed to polar residues; that stretch reads MMKMNTGTSPS. Residues 1–27 form a disordered region; that stretch reads MMKMNTGTSPSVIGGGTSGNEWESRPG. The Ubiquitin-like domain occupies 45–119; it reads FRVRVKYGSV…LVVKEDPISQ (75 aa). The BAG domain maps to 138-216; sequence SISDISFEVD…KYVEALDLLK (79 aa). The tract at residues 249 to 268 is disordered; sequence VEEEEEEPRNSNASSSSGTP. A compositionally biased stretch (polar residues) spans 258 to 267; sequence NSNASSSSGT. Residue Ser263 is modified to Phosphoserine.

Binds to the ATPase domain of HSP70/HSC70 chaperones. Interacts with HSP70-1.

Co-chaperone that regulates diverse cellular pathways, such as programmed cell death and stress responses. The chain is BAG family molecular chaperone regulator 3 (BAG3) from Arabidopsis thaliana (Mouse-ear cress).